Reading from the N-terminus, the 431-residue chain is Glucose-1-phosphate adenylyltransferase (431 aa).

Lys39 contacts beta-D-fructose 1,6-bisphosphate. Residues Arg40, His46, and Arg52 each contribute to the AMP site. Residue Tyr114 participates in alpha-D-glucose 1-phosphate binding. Residue Arg130 coordinates AMP. Residues Gly179, 194–195, and Ser212 each bind alpha-D-glucose 1-phosphate; that span reads EK. Residues Glu370 and Arg386 each coordinate AMP. Residues 419-423 and 429-431 contribute to the beta-D-fructose 1,6-bisphosphate site; these read REMLR and QER.

Belongs to the bacterial/plant glucose-1-phosphate adenylyltransferase family. As to quaternary structure, homotetramer.

The catalysed reaction is alpha-D-glucose 1-phosphate + ATP + H(+) = ADP-alpha-D-glucose + diphosphate. It participates in glycan biosynthesis; glycogen biosynthesis. Its activity is regulated as follows. Allosterically activated by fructose-1,6-bisphosphate (F16BP) and inhibited by AMP. Involved in the biosynthesis of ADP-glucose, a building block required for the elongation reactions to produce glycogen. Catalyzes the reaction between ATP and alpha-D-glucose 1-phosphate (G1P) to produce pyrophosphate and ADP-Glc. The sequence is that of Glucose-1-phosphate adenylyltransferase from Shigella dysenteriae serotype 1 (strain Sd197).